We begin with the raw amino-acid sequence, 713 residues long: Protein-glucosylgalactosylhydroxylysine glucosidase (713 aa).

The signal sequence occupies residues 1–21 (MIINSQEYLQPPQWWNERVEA). Asparagine 104, asparagine 160, asparagine 171, asparagine 186, and asparagine 283 each carry an N-linked (GlcNAc...) asparagine glycan. 317 to 318 (WD) is a substrate binding site. N-linked (GlcNAc...) asparagine glycosylation is present at asparagine 361. Glutamate 451 serves as the catalytic Proton donor. N-linked (GlcNAc...) asparagine glycans are attached at residues asparagine 457 and asparagine 481. Residue 521–522 (KQ) participates in substrate binding. Residues asparagine 535, asparagine 576, and asparagine 662 are each glycosylated (N-linked (GlcNAc...) asparagine).

Belongs to the glycosyl hydrolase 65 family.

Its subcellular location is the secreted. The enzyme catalyses (5R)-5-O-[alpha-D-glucosyl-(1-&gt;2)-beta-D-galactosyl]-5-hydroxy-L-lysyl-[collagen] + H2O = (5R)-5-O-(beta-D-galactosyl)-5-hydroxy-L-lysyl-[collagen] + D-glucose. In terms of biological role, catalyzes the hydrolysis of glucose from the disaccharide unit linked to hydroxylysine residues of collagen and collagen-like proteins. In Dictyostelium discoideum (Social amoeba), this protein is Protein-glucosylgalactosylhydroxylysine glucosidase.